Consider the following 318-residue polypeptide: Small ribosomal subunit biogenesis GTPase RsgA (318 aa).

A CP-type G domain is found at arginine 82–phenylalanine 246. GTP-binding positions include asparagine 132–aspartate 135 and glycine 186–threonine 194. Residues cysteine 270, cysteine 275, histidine 277, and cysteine 283 each contribute to the Zn(2+) site.

It belongs to the TRAFAC class YlqF/YawG GTPase family. RsgA subfamily. In terms of assembly, monomer. Associates with 30S ribosomal subunit, binds 16S rRNA. Requires Zn(2+) as cofactor.

It is found in the cytoplasm. Functionally, one of several proteins that assist in the late maturation steps of the functional core of the 30S ribosomal subunit. Helps release RbfA from mature subunits. May play a role in the assembly of ribosomal proteins into the subunit. Circularly permuted GTPase that catalyzes slow GTP hydrolysis, GTPase activity is stimulated by the 30S ribosomal subunit. The sequence is that of Small ribosomal subunit biogenesis GTPase RsgA from Variovorax paradoxus (strain S110).